The following is a 263-amino-acid chain: Palmitoyltransferase ZDHHC22 (263 aa).

Residues 1-9 (MLALRLLNV) are Cytoplasmic-facing. A helical transmembrane segment spans residues 10–30 (VAPAYFLCISLVTFVLQLFLF). Residues 31 to 47 (LPSMREDPTATPLFSPA) are Lumenal-facing. Residues 48 to 68 (VLHGALFLFLSANALGNYILV) traverse the membrane as a helical segment. Residues 69–125 (VQNSPDDLGACQGTSSQRPQRPPPSTHFCRVCARVTLRHDHHCFFTGNCIGSRNMRN) lie on the Cytoplasmic side of the membrane. The DHHC domain occupies 91 to 131 (PPSTHFCRVCARVTLRHDHHCFFTGNCIGSRNMRNFILFCL). Cysteine 111 serves as the catalytic S-palmitoyl cysteine intermediate. A run of 2 helical transmembrane segments spans residues 126–146 (FILF…AGVA) and 147–167 (YISA…TLLP). At 168-182 (TSISQFFSGAVLGSD) the chain is on the cytoplasmic side. The helical transmembrane segment at 183 to 203 (MFVILMLYLWFAVGLACAGFC) threads the bilayer. Residues 204–263 (CHQLLLILRGQTRYQVRKGVAVRARPWRKNLQEVFGKRWLLGLLVPMFNVGTESSKQQDK) are Lumenal-facing.

This sequence belongs to the DHHC palmitoyltransferase family. As to quaternary structure, interacts with CNN3.

It is found in the endoplasmic reticulum membrane. The protein localises to the golgi apparatus membrane. It catalyses the reaction L-cysteinyl-[protein] + hexadecanoyl-CoA = S-hexadecanoyl-L-cysteinyl-[protein] + CoA. In terms of biological role, palmitoyltransferase that could catalyze the addition of palmitate onto various protein substrates and be involved in a variety of cellular processes. Catalyzes the palmitoylation of KCNMA1, regulating localization of KCNMA1 to the plasma membrane. Might also mediate palmitoylation of CNN3. The sequence is that of Palmitoyltransferase ZDHHC22 from Rattus norvegicus (Rat).